A 259-amino-acid chain; its full sequence is Proliferating cell nuclear antigen (259 aa).

Residues R61–R80 mediate DNA binding. K164 participates in a covalent cross-link: Glycyl lysine isopeptide (Lys-Gly) (interchain with G-Cter in SUMO); alternate. Residue K164 forms a Glycyl lysine isopeptide (Lys-Gly) (interchain with G-Cter in ubiquitin); alternate linkage.

This sequence belongs to the PCNA family. As to quaternary structure, homotrimer. Monoubiquitinated on Lys-164 upon DNA damage, and then polyubiquitinated through 'Lys-63'-linkage.

It localises to the nucleus. This protein is an auxiliary protein of DNA polymerase delta and is involved in the control of eukaryotic DNA replication by increasing the polymerase's processibility during elongation of the leading strand. Involved in DNA repair. This chain is Proliferating cell nuclear antigen, found in Chaetomium thermophilum (strain DSM 1495 / CBS 144.50 / IMI 039719) (Thermochaetoides thermophila).